The primary structure comprises 200 residues: Alpha/beta-tubulin-N-acetyltransferase 9 (200 aa).

One can recognise an N-acetyltransferase domain in the interval 34-181 (ETLRELTASE…HEVTLERPIT (148 aa)).

The protein belongs to the acetyltransferase family. GNAT subfamily. As to quaternary structure, interacts with microtubules as well as alpha/beta-tubulin heterodimers.

It localises to the nucleus. The protein localises to the cytoplasm. The protein resides in the cytoskeleton. It is found in the spindle. Its subcellular location is the spindle pole. The catalysed reaction is N-terminal L-methionyl-[tubulin] + acetyl-CoA = N-terminal N(alpha)-acetyl-L-methionyl-[tubulin] + CoA + H(+). In terms of biological role, N-acetyltransferase that mediates the acetylation of the N-terminal residues of alpha- and beta-tubulin. Required for microtubule stability and inhibition of JNK signaling to promote cell survival during development, possibly acting independently of its N-acetyltransferase activity. Necessary for the stabilization of spindle microtubules and for mitosis progression. Regulates microtubule stability by inhibiting Spastin-mediated depolymerization and promoting Eb1-mediated polymerization. The protein is Alpha/beta-tubulin-N-acetyltransferase 9 of Drosophila melanogaster (Fruit fly).